Here is a 1411-residue protein sequence, read N- to C-terminus: Early endosome antigen 1 (1411 aa).

Positions 1 to 27 (MFRRILQRTPGRVGSQGSDLDSSATPI) are disordered. Over residues 15–27 (SQGSDLDSSATPI) the composition is skewed to polar residues. The C2H2-type zinc-finger motif lies at 41–64 (FICPQCMKSLGSADELFKHYQAVH). Phosphoserine is present on residues Ser52 and Ser70. Residues 78–1348 (LALTRDDITL…IKHTQALNRK (1271 aa)) are a coiled coil. Disordered regions lie at residues 476–501 (STELQHQLEKSKQQHQEQQALQQSAT) and 1189–1217 (EKESQQLMREQVKKEEEKRKEEFSEKEAK). Residues 481 to 490 (HQLEKSKQQH) are compositionally biased toward basic and acidic residues. Over residues 491–500 (QEQQALQQSA) the composition is skewed to low complexity. Residues 1352–1410 (DNEVQNCMSCGKCFSVTVRRHHCRQCGNIFCAECSTKNALTPSSKKPVRVCDACFNDLQ) form an FYVE-type zinc finger. Cys1358, Cys1361, Cys1374, Cys1377, Cys1382, Cys1385, Cys1402, and Cys1405 together coordinate Zn(2+).

In terms of assembly, homodimer. Binds STX6. Binds RAB5A, RAB5B, RAB5C and RAB22A that have been activated by GTP-binding. Interacts with ERBB2. Interacts with RAB31. Interacts with SAMD9 and SAMD9L. May interact with PLEKHF2.

Its subcellular location is the cytoplasm. It is found in the early endosome membrane. Binds phospholipid vesicles containing phosphatidylinositol 3-phosphate and participates in endosomal trafficking. This chain is Early endosome antigen 1 (Eea1), found in Mus musculus (Mouse).